Reading from the N-terminus, the 226-residue chain is UPF0758 protein SUB0843 (226 aa).

The region spanning 103-225 (QILSSYQVAK…YYSFREKSDI (123 aa)) is the MPN domain. Zn(2+)-binding residues include His-174, His-176, and Asp-187. The JAMM motif signature appears at 174 to 187 (HNHPSGLTNPSEND).

The protein belongs to the UPF0758 family.

This chain is UPF0758 protein SUB0843, found in Streptococcus uberis (strain ATCC BAA-854 / 0140J).